We begin with the raw amino-acid sequence, 327 residues long: Acetaldehyde dehydrogenase 5 (327 aa).

An NAD(+)-binding site is contributed by S15–I18. Catalysis depends on C133, which acts as the Acyl-thioester intermediate. NAD(+) contacts are provided by residues S164–N172 and N297.

This sequence belongs to the acetaldehyde dehydrogenase family.

It catalyses the reaction acetaldehyde + NAD(+) + CoA = acetyl-CoA + NADH + H(+). The polypeptide is Acetaldehyde dehydrogenase 5 (Rhodococcus jostii (strain RHA1)).